A 165-amino-acid polypeptide reads, in one-letter code: MAWRPGERGAPASRPRLALLLLLLLLPLPSGAWYKHVASPRYHTVGRAAGLLMGLRRSPYLWRRALRAAAGPLARDTLSPEPAAREAPLLLPSWVQELWETRRRSSQAGIPVRAPRSPRAPEPALEPESLDFSGAGQRLRRDVSRPAVDPAANRLGLPCLAPGPF.

The first 32 residues, M1–A32, serve as a signal peptide directing secretion. Positions A65–F165 are excised as a propeptide. Residues S106–F165 form a disordered region. The span at R113–P127 shows a compositional bias: low complexity. S133 is a glycosylation site (O-linked (Xyl...) (chondroitin sulfate) serine).

The protein belongs to the neuropeptide B/W family. Detected in cerebrospinal fluid and urine (at protein level). Detected at high levels in the substantia nigra, fetal kidney and trachea; at lower levels in testis, uterus, ovary and placenta. Not detectable in many regions of the central nervous system. Also detected at high levels in lymphoblastic leukemia and colorectal adenocarcinoma.

It localises to the secreted. Plays a regulatory role in the organization of neuroendocrine signals accessing the anterior pituitary gland. Stimulates water drinking and food intake. May play a role in the hypothalamic response to stress. NPW23 activates GPR7 and GPR8 more efficiently than NPW30. The protein is Neuropeptide W (NPW) of Homo sapiens (Human).